The chain runs to 229 residues: MGITGMIYMVPMVFSLIVLISCSSTMGYNYFQFTQQYQPAVCNSNPTPCKDPPDKLFTVHGLWPSNDVGDDPIYCKNKTIKSQQIGNLTAQLIIIWPNVLDRTDHVGFWNRQWNKHGSCGKAPTIKDEMHYFKTVIKMYITQKQNVSEILSRAKIEPEGKIRRRDDIINAIRLGTKDKKPKLKCQKNNQTTELVEITICSDRNLTQFIDCPRSSFKGSPFHCPTNHILY.

A signal peptide spans 1–27 (MGITGMIYMVPMVFSLIVLISCSSTMG). Residue Q36 coordinates RNA. The cysteines at positions 42 and 49 are disulfide-linked. H60 lines the RNA pocket. The active-site Proton donor is the H60. C75 and C119 form a disulfide bridge. N-linked (GlcNAc) asparagine glycosylation is found at N77 and N87. RNA contacts are provided by residues 98–99 (NV), F108, 111–112 (RQ), and 115–116 (KH). The active site involves Q112. The Proton acceptor role is filled by H116. N145 carries N-linked (GlcNAc...) (high mannose) asparagine glycosylation. 2 cysteine pairs are disulfide-bonded: C184/C222 and C199/C210. A glycan (N-linked (GlcNAc) asparagine; alternate) is linked at N188. N-linked (GlcNAc...) asparagine; alternate glycosylation is found at N188 and N203.

Belongs to the RNase T2 family. Post-translationally, the N-glycans attached at Asn-188 and Asn-203 consist of either monosaccharide (GlcNAc) or disaccharide (GlcNAc-GlcNAc) that could not be distinguished.

It carries out the reaction a ribonucleotidyl-ribonucleotide-RNA + H2O = a 3'-end 3'-phospho-ribonucleotide-RNA + a 5'-end dephospho-ribonucleoside-RNA + H(+). Self-incompatibility (SI) is the inherited ability of a flowering plant to prevent self-fertilization by discriminating between self and non-self pollen during pollination. In many species, self-incompatibility is controlled by the single, multiallelic locus S. The polypeptide is Ribonuclease S-6 (Pyrus pyrifolia (Chinese pear)).